The primary structure comprises 342 residues: uncharacterized protein (342 aa).

This is an uncharacterized protein from Acanthamoeba polyphaga (Amoeba).